Consider the following 556-residue polypeptide: Glucose-6-phosphate isomerase (556 aa).

Glu-363 serves as the catalytic Proton donor. Catalysis depends on residues His-394 and Lys-522.

The protein belongs to the GPI family.

It localises to the cytoplasm. It catalyses the reaction alpha-D-glucose 6-phosphate = beta-D-fructose 6-phosphate. It functions in the pathway carbohydrate biosynthesis; gluconeogenesis. The protein operates within carbohydrate degradation; glycolysis; D-glyceraldehyde 3-phosphate and glycerone phosphate from D-glucose: step 2/4. Its function is as follows. Catalyzes the reversible isomerization of glucose-6-phosphate to fructose-6-phosphate. The sequence is that of Glucose-6-phosphate isomerase from Frankia casuarinae (strain DSM 45818 / CECT 9043 / HFP020203 / CcI3).